The primary structure comprises 115 residues: Tyrosine-protein phosphatase 24 (115 aa).

In terms of domain architecture, Tyrosine-protein phosphatase spans 1 to 115; the sequence is WMMIVEQKCR…ETGSDAPMVV (115 aa). D83 contacts substrate.

It belongs to the protein-tyrosine phosphatase family.

The enzyme catalyses O-phospho-L-tyrosyl-[protein] + H2O = L-tyrosyl-[protein] + phosphate. This Styela plicata (Wrinkled sea squirt) protein is Tyrosine-protein phosphatase 24 (STY-24).